The chain runs to 165 residues: Nicotine 6-hydroxylase small subunit (165 aa).

In terms of domain architecture, 2Fe-2S ferredoxin-type spans 10–86 (VEIDVEVNGR…GRSIRTVEDL (77 aa)). Positions 48, 53, 56, and 68 each coordinate [2Fe-2S] cluster.

In terms of assembly, heterotrimer composed of a large subunit (NdhL), a medium subunit (NdhM) and a small subunit (NdhS). [2Fe-2S] cluster serves as cofactor.

It localises to the cytoplasm. The catalysed reaction is (R)-nicotine + A + H2O = (R)-6-hydroxynicotine + AH2. It catalyses the reaction (S)-nicotine + A + H2O = (S)-6-hydroxynicotine + AH2. It participates in alkaloid degradation; nicotine degradation; 6-hydroxypseudooxynicotine from nicotine (R-isomer route): step 1/2. It functions in the pathway alkaloid degradation; nicotine degradation; 6-hydroxypseudooxynicotine from nicotine (S-isomer route): step 1/2. With respect to regulation, nicotine dehydrogenase activity is inhibited by tungsten. Functionally, component of the nicotine 6-hydroxylase, which is involved in the degradation of nicotine. Catalyzes the hydroxylation of the pyridine ring at C6 to form 6-hydroxynicotine. Can use both L-nicotine and D-nicotine. The sequence is that of Nicotine 6-hydroxylase small subunit from Paenarthrobacter nicotinovorans (Arthrobacter nicotinovorans).